Here is a 459-residue protein sequence, read N- to C-terminus: Ribulose bisphosphate carboxylase/oxygenase activase, chloroplastic (459 aa).

Residue G164 to S171 coordinates ATP.

Belongs to the RuBisCO activase family.

The protein resides in the plastid. It localises to the chloroplast stroma. Its function is as follows. Activation of RuBisCO (ribulose-1,5-bisphosphate carboxylase/oxygenase; EC 4.1.1.39) involves the ATP-dependent carboxylation of the epsilon-amino group of lysine leading to a carbamate structure. This is Ribulose bisphosphate carboxylase/oxygenase activase, chloroplastic from Solanum pennellii (Tomato).